We begin with the raw amino-acid sequence, 267 residues long: NAD kinase (267 aa).

Asp45 serves as the catalytic Proton acceptor. NAD(+) is bound by residues Asp45–Gly46, Asn121–Glu122, Arg147, Asp149, Thr160–Ser165, and Ala184.

It belongs to the NAD kinase family. A divalent metal cation is required as a cofactor.

Its subcellular location is the cytoplasm. It catalyses the reaction NAD(+) + ATP = ADP + NADP(+) + H(+). Involved in the regulation of the intracellular balance of NAD and NADP, and is a key enzyme in the biosynthesis of NADP. Catalyzes specifically the phosphorylation on 2'-hydroxyl of the adenosine moiety of NAD to yield NADP. The chain is NAD kinase from Lactobacillus acidophilus (strain ATCC 700396 / NCK56 / N2 / NCFM).